We begin with the raw amino-acid sequence, 56 residues long: UPF0391 membrane protein Noc_0482 (56 aa).

2 helical membrane passes run M1 to T21 and H29 to G49.

It belongs to the UPF0391 family.

It is found in the cell membrane. The protein is UPF0391 membrane protein Noc_0482 of Nitrosococcus oceani (strain ATCC 19707 / BCRC 17464 / JCM 30415 / NCIMB 11848 / C-107).